A 355-amino-acid chain; its full sequence is DNA polymerase IV (355 aa).

The 182-residue stretch at 7–188 folds into the UmuC domain; it reads IIHIDMDCFY…LPLSKIPGVG (182 aa). D11 and D106 together coordinate Mg(2+). E107 is a catalytic residue.

This sequence belongs to the DNA polymerase type-Y family. In terms of assembly, monomer. Mg(2+) serves as cofactor.

The protein resides in the cytoplasm. It carries out the reaction DNA(n) + a 2'-deoxyribonucleoside 5'-triphosphate = DNA(n+1) + diphosphate. Its function is as follows. Poorly processive, error-prone DNA polymerase involved in untargeted mutagenesis. Copies undamaged DNA at stalled replication forks, which arise in vivo from mismatched or misaligned primer ends. These misaligned primers can be extended by PolIV. Exhibits no 3'-5' exonuclease (proofreading) activity. May be involved in translesional synthesis, in conjunction with the beta clamp from PolIII. This Mannheimia succiniciproducens (strain KCTC 0769BP / MBEL55E) protein is DNA polymerase IV.